The primary structure comprises 308 residues: Dipeptide transport system permease protein DppB (308 aa).

A run of 7 helical transmembrane segments spans residues Trp10 to Ile30, Leu59 to Ile79, Leu100 to Ala120, Ala131 to Ile151, Ser168 to Ala188, Met228 to Ile248, and Val278 to Leu298. One can recognise an ABC transmembrane type-1 domain in the interval Phe94–Tyr295.

It belongs to the binding-protein-dependent transport system permease family. OppBC subfamily.

It localises to the cell membrane. Probably part of the ABC transporter DppBCDE involved in dipeptide transport. Responsible for the translocation of the substrate across the membrane. The chain is Dipeptide transport system permease protein DppB (dppB) from Bacillus subtilis (strain 168).